We begin with the raw amino-acid sequence, 365 residues long: Protein Tob1 (365 aa).

The short motif at 22–39 is the Bipartite nuclear localization signal element; it reads RRRVNIFGEELERLLKQK. Residues 82-92 form an important for nuclear localization region; that stretch reads VRGNLPQDLSV. Low complexity predominate over residues 144-160; sequence DPASSVSSSPSPPFGHS. Positions 144–171 are disordered; it reads DPASSVSSSPSPPFGHSAAVSPTFMPRS. A required for interaction with CPEB3 region spans residues 161-220; the sequence is AAVSPTFMPRSTQPLTFTTATFAATKFGSTKMKNSGRSSKVARTSPISLGLNVNVNDLLK. Residue threonine 204 is modified to Phosphothreonine. The Nuclear export signal motif lies at 228-236; it reads MHSLYGLGL. The segment at 233–287 is disordered; sequence GLGLGSQQQPQPQPQQPPSQPPPPPPPPQQQQQHQQQQQQQQQQQQQPQQQTSAL. Positions 243–261 are enriched in pro residues; it reads QPQPQQPPSQPPPPPPPPQ. Over residues 262-283 the composition is skewed to low complexity; that stretch reads QQQQHQQQQQQQQQQQQQPQQQ.

This sequence belongs to the BTG family. As to quaternary structure, interacts with ERBB2. Interacts with CNOT7. Interacts with CPEB3 (via C-terminal RNA-binding region); recruits CNOT7 to CPEB3 to form a ternary complex required for mRNA deadenylation and decay. Interacts with CNOT8. Interacts with CPEB4. Post-translationally, phosphorylated on Ser and Thr residues.

Its subcellular location is the cytoplasm. It localises to the nucleus. Anti-proliferative protein; the function is mediated by association with deadenylase subunits of the CCR4-NOT complex. Mediates CPEB3-accelerated mRNA deadenylation by binding to CPEB3 and recruiting CNOT7 which leads to target mRNA deadenylation and decay. This is Protein Tob1 (Tob1) from Rattus norvegicus (Rat).